The chain runs to 374 residues: Nucleosome assembly protein 1;3 (374 aa).

Residues 26-80 (VNALKNKLQNLAGQHSDVLENLTPKIRRRVEVLREIQGKHDEIETKFREERAALE) adopt a coiled-coil conformation. The residue at position 41 (serine 41) is a Phosphoserine. The short motif at 47-62 (LTPKIRRRVEVLREIQ) is the Nuclear export signal element. Positions 222 to 227 (KKKPKK) match the Nuclear localization signal motif. Residues 299 to 339 (IEGEEFEIDNDDEDDIDEDEDEDEEDEDEDEEEDDEDEEEE) show a composition bias toward acidic residues. The segment at 299–374 (IEGEEFEIDN…GERPPECKQQ (76 aa)) is disordered. Residues 343–355 (TKKKPSVLHKKGG) show a composition bias toward basic residues. The segment covering 364–374 (QGERPPECKQQ) has biased composition (basic and acidic residues). Cysteine 371 is subject to Cysteine methyl ester. Cysteine 371 is lipidated: S-farnesyl cysteine. Residues 372 to 374 (KQQ) constitute a propeptide, removed in mature form.

It belongs to the nucleosome assembly protein (NAP) family. Can form homomeric and heteromeric protein complexes with NAP1;1, NAP1;2 and NAP1;4. Binds histone H2A and associates with chromatin in vivo. As to expression, ubiquitous.

It is found in the nucleus. Its subcellular location is the cytoplasm. Functionally, may modulate chromatin structure by regulation of nucleosome assembly/disassembly. May function in nucleotide excision repair (NER). Involved in somatic homologous recombination. Could be involved in response to abscisic acid (ABA) and to salt stress. The polypeptide is Nucleosome assembly protein 1;3 (NAP1;3) (Arabidopsis thaliana (Mouse-ear cress)).